The chain runs to 1863 residues: Breast cancer type 1 susceptibility protein homolog (1863 aa).

N-acetylmethionine is present on methionine 1. Residues cysteine 24–lysine 65 form an RING-type zinc finger. A Glycyl lysine isopeptide (Lys-Gly) (interchain with G-Cter in SUMO2) cross-link involves residue lysine 109. Serine 114 carries the post-translational modification Phosphoserine. Composition is skewed to basic and acidic residues over residues lysine 231–glutamine 240 and threonine 248–lysine 260. The tract at residues lysine 231–valine 266 is disordered. Lysine 300 is covalently cross-linked (Glycyl lysine isopeptide (Lys-Gly) (interchain with G-Cter in SUMO2)). Residues asparagine 305–glutamate 336 form a disordered region. Polar residues predominate over residues asparagine 318–serine 334. Lysine 338 is covalently cross-linked (Glycyl lysine isopeptide (Lys-Gly) (interchain with G-Cter in SUMO2)). Serine 394, serine 397, serine 422, and serine 433 each carry phosphoserine. Glycyl lysine isopeptide (Lys-Gly) (interchain with G-Cter in SUMO2) cross-links involve residues lysine 442, lysine 458, and lysine 518. Position 550 is a phosphoserine (serine 550). Lysine 582 participates in a covalent cross-link: Glycyl lysine isopeptide (Lys-Gly) (interchain with G-Cter in SUMO2). Positions asparagine 653 to leucine 699 are disordered. Phosphoserine occurs at positions 693, 707, and 724. Residues lysine 733 and lysine 738 each participate in a glycyl lysine isopeptide (Lys-Gly) (interchain with G-Cter in SUMO2) cross-link. Phosphoserine is present on residues serine 752 and serine 839. Positions alanine 886 to serine 914 are disordered. Positions serine 900–serine 914 are enriched in basic and acidic residues. Residues lysine 917 and lysine 986 each participate in a glycyl lysine isopeptide (Lys-Gly) (interchain with G-Cter in SUMO2) cross-link. Serine 987 bears the Phosphoserine; by CHEK2 mark. Serine 1008 carries the post-translational modification Phosphoserine. Residues serine 1042–asparagine 1059 show a composition bias toward polar residues. Residues serine 1042 to glycine 1062 form a disordered region. Lysine 1079 is covalently cross-linked (Glycyl lysine isopeptide (Lys-Gly) (interchain with G-Cter in SUMO2)). A phosphoserine mark is found at serine 1143, serine 1189, serine 1191, serine 1211, serine 1217, serine 1218, serine 1280, serine 1328, serine 1336, serine 1342, and serine 1387. Residues arginine 1323 to arginine 1397 form a disordered region. The segment covering serine 1342–serine 1360 has biased composition (acidic residues). Polar residues predominate over residues glutamate 1373–arginine 1397. Position 1394 is a phosphothreonine (threonine 1394). Residues arginine 1397–glutamine 1424 form an interaction with PALB2 region. Residues serine 1423, serine 1457, serine 1524, and serine 1542 each carry the phosphoserine modification. A disordered region spans residues leucine 1442–cysteine 1501. The span at proline 1445–glutamate 1470 shows a compositional bias: polar residues. A disordered region spans residues glutamate 1540–histidine 1618. The span at valine 1607–histidine 1618 shows a compositional bias: polar residues. BRCT domains are found at residues serine 1642 to valine 1736 and proline 1756 to isoleucine 1855.

As to quaternary structure, heterodimer with BARD1. Part of the BRCA1-associated genome surveillance complex (BASC), which contains BRCA1, MSH2, MSH6, MLH1, ATM, BLM, PMS2 and the MRE11-RAD50-NBN protein (MRN) complex. This association could be a dynamic process changing throughout the cell cycle and within subnuclear domains. Component of the BRCA1-A complex, at least composed of BRCA1, BARD1, UIMC1/RAP80, ABRAXAS1, BRCC3/BRCC36, BABAM2 and BABAM1/NBA1. Interacts (via the BRCT domains) with ABRAXAS1 (phosphorylated form); this is important for recruitment to sites of DNA damage. Can form a heterotetramer with two molecules of ABRAXAS1 (phosphorylated form). Component of the BRCA1-RBBP8 complex. Interacts (via the BRCT domains) with RBBP8 ('Ser-327' phosphorylated form); the interaction ubiquitinates RBBP8, regulates CHEK1 activation, and involves RBBP8 in BRCA1-dependent G2/M checkpoint control on DNA damage. Associates with RNA polymerase II holoenzyme. Interacts with SMC1A, NELFB, DCLRE1C, CLSPN. CHEK1, CHEK2, BAP1, BRCC3, UBXN1 and PCLAF. Interacts (via BRCT domains) with BRIP1 (phosphorylated form). Interacts with FANCD2 (ubiquitinated form). Interacts with H2AX (phosphorylated on 'Ser-140'). Interacts (via the BRCT domains) with ACACA (phosphorylated form); the interaction prevents dephosphorylation of ACACA. Part of a BRCA complex containing BRCA1, BRCA2 and PALB2. Interacts directly with PALB2; the interaction is essential for its function in HRR. Interacts directly with BRCA2; the interaction occurs only in the presence of PALB2 which serves as the bridging protein. Interacts (via the BRCT domains) with LMO4; the interaction represses the transcriptional activity of BRCA1. Interacts (via the BRCT domains) with CCAR2 (via N-terminus); the interaction represses the transcriptional activator activity of BRCA1. Interacts with EXD2. Interacts (via C-terminus) with DHX9; this interaction is direct and links BRCA1 to the RNA polymerase II holoenzyme. Interacts with DNA helicase ZGRF1; the interaction is increased following DNA damage induction. Post-translationally, phosphorylated in response to IR, UV, and various stimuli that cause checkpoint activation, probably by ATM or ATR. Phosphorylation at Ser-987 by CHEK2 regulates mitotic spindle assembly. Phosphorylation by AURKA regulates centrosomal microtubule nucleation. In terms of processing, autoubiquitinated, undergoes 'Lys-6'-linked polyubiquitination. 'Lys-6'-linked polyubiquitination does not promote degradation.

The protein resides in the nucleus. The protein localises to the chromosome. It localises to the cytoplasm. It catalyses the reaction S-ubiquitinyl-[E2 ubiquitin-conjugating enzyme]-L-cysteine + [acceptor protein]-L-lysine = [E2 ubiquitin-conjugating enzyme]-L-cysteine + N(6)-ubiquitinyl-[acceptor protein]-L-lysine.. The protein operates within protein modification; protein ubiquitination. E3 ubiquitin-protein ligase that specifically mediates the formation of 'Lys-6'-linked polyubiquitin chains and plays a central role in DNA repair by facilitating cellular responses to DNA damage. It is unclear whether it also mediates the formation of other types of polyubiquitin chains. The BRCA1-BARD1 heterodimer coordinates a diverse range of cellular pathways such as DNA damage repair, ubiquitination and transcriptional regulation to maintain genomic stability. Regulates centrosomal microtubule nucleation. Required for appropriate cell cycle arrests after ionizing irradiation in both the S-phase and the G2 phase of the cell cycle. Required for FANCD2 targeting to sites of DNA damage. Inhibits lipid synthesis by binding to inactive phosphorylated ACACA and preventing its dephosphorylation. Contributes to homologous recombination repair (HRR) via its direct interaction with PALB2, fine-tunes recombinational repair partly through its modulatory role in the PALB2-dependent loading of BRCA2-RAD51 repair machinery at DNA breaks. Component of the BRCA1-RBBP8 complex which regulates CHEK1 activation and controls cell cycle G2/M checkpoints on DNA damage via BRCA1-mediated ubiquitination of RBBP8. Acts as a transcriptional activator. The sequence is that of Breast cancer type 1 susceptibility protein homolog (BRCA1) from Macaca mulatta (Rhesus macaque).